A 175-amino-acid polypeptide reads, in one-letter code: Regenerating islet-derived protein 3-beta (175 aa).

The signal sequence occupies residues 1 to 26 (MLPPTACSVMSWMLLSCLMLLSQVQG). The propeptide occupies 27–37 (EDSLKNIPSAR). Disulfide bonds link Cys-40–Cys-51, Cys-68–Cys-171, and Cys-146–Cys-163. Residues 47 to 172 (YGSYCYALFQ…CEVKLPYVCK (126 aa)) enclose the C-type lectin domain. Zn(2+) is bound at residue His-107. An EPN motif is present at residues 114 to 116 (EPN). Position 121 (Glu-121) interacts with Zn(2+).

In terms of assembly, forms a hexameric membrane-permeabilizing oligomeric pore on membrane phospholipids. The hexamer is formed by three dimers related by helical symmetry. Forms filaments, filamentation traps pore complexes and limits damage to host cells. Interacts with EXTL3. In terms of processing, proteolytic processing by trypsin removes an inhibitory N-terminal propeptide and is essential for peptidoglycan binding and antibacterial activity. Constitutively expressed in the small intestine, moderately in colon and at an extremely low level in healthy pancreas.

It is found in the secreted. Its activity is regulated as follows. Lipopolysaccharide inhibits pore-forming activity, explaining why is bactericidal for Gram-positive but not Gram-negative bacteria. Its function is as follows. Bactericidal C-type lectin which acts against several intestinal Gram-positive and Gram-negative bacteria. Lacks antibacterial activity against S.typhimurium. May play a role in protection against infection with S.enteritidis by inhibiting its translocation from the gut lumen into intestinal tissues and further extraintestinal tissues. Functionally, acts as a hormone in response to different stimuli. Secreted by different cell types to activate its receptor EXTL3 and induce cell specific signaling pathways. In pancreas, is able stimulate cell proliferation. This chain is Regenerating islet-derived protein 3-beta, found in Mus musculus (Mouse).